The following is a 609-amino-acid chain: Sulfite reductase [NADPH] flavoprotein alpha-component (609 aa).

One can recognise a Flavodoxin-like domain in the interval 72–210 (ITLISASQTG…LAAQWRRQLV (139 aa)). FMN is bound by residues 78 to 83 (SQTGNA) and 125 to 128 (STQG). Residues 244-458 (SSPLQATFAV…IEHNDNFRLP (215 aa)) form the FAD-binding FR-type domain. FAD is bound by residues threonine 332, glutamine 366, 396-399 (RLYS), 414-416 (TVG), tyrosine 420, and 429-432 (GGAS). Residues 529–530 (SR), 535–539 (KIYVQ), and aspartate 571 contribute to the NADP(+) site. Position 609 (tyrosine 609) interacts with FAD.

The protein belongs to the NADPH-dependent sulphite reductase flavoprotein subunit CysJ family. In the N-terminal section; belongs to the flavodoxin family. This sequence in the C-terminal section; belongs to the flavoprotein pyridine nucleotide cytochrome reductase family. In terms of assembly, alpha(8)-beta(8). The alpha component is a flavoprotein, the beta component is a hemoprotein. The cofactor is FAD. FMN serves as cofactor.

It catalyses the reaction hydrogen sulfide + 3 NADP(+) + 3 H2O = sulfite + 3 NADPH + 4 H(+). The protein operates within sulfur metabolism; hydrogen sulfide biosynthesis; hydrogen sulfide from sulfite (NADPH route): step 1/1. Functionally, component of the sulfite reductase complex that catalyzes the 6-electron reduction of sulfite to sulfide. This is one of several activities required for the biosynthesis of L-cysteine from sulfate. The flavoprotein component catalyzes the electron flow from NADPH -&gt; FAD -&gt; FMN to the hemoprotein component. In Pectobacterium atrosepticum (strain SCRI 1043 / ATCC BAA-672) (Erwinia carotovora subsp. atroseptica), this protein is Sulfite reductase [NADPH] flavoprotein alpha-component.